The sequence spans 300 residues: Ribonuclease Z (300 aa).

Zn(2+) is bound by residues H63, H65, D67, H68, H140, D207, and H265. The active-site Proton acceptor is D67.

The protein belongs to the RNase Z family. In terms of assembly, homodimer. The cofactor is Zn(2+).

The enzyme catalyses Endonucleolytic cleavage of RNA, removing extra 3' nucleotides from tRNA precursor, generating 3' termini of tRNAs. A 3'-hydroxy group is left at the tRNA terminus and a 5'-phosphoryl group is left at the trailer molecule.. Zinc phosphodiesterase, which displays some tRNA 3'-processing endonuclease activity. Probably involved in tRNA maturation, by removing a 3'-trailer from precursor tRNA. This Ignicoccus hospitalis (strain KIN4/I / DSM 18386 / JCM 14125) protein is Ribonuclease Z.